The following is a 782-amino-acid chain: LINE-1 type transposase domain-containing protein 1 (782 aa).

Disordered regions lie at residues 1-30 (MSGV…TATS), 90-200 (QEGD…GGAG), and 338-397 (NKGT…SAEE). 2 stretches are compositionally biased toward basic and acidic residues: residues 11–27 (LQKE…ERKT) and 95–107 (ISER…KVEE). Residue S136 is modified to Phosphoserine. Basic and acidic residues-rich tracts occupy residues 143-158 (SLER…HGRC) and 183-194 (EENRLKAPKESP). The segment covering 347–396 (GEEEEISETQGEETSEGETSELGEEEGSESEEEEESSESEEEEESSESAE) has biased composition (acidic residues). Residues S407, S409, S442, S478, S490, S559, and S567 each carry the phosphoserine modification.

Belongs to the transposase 22 family.

The protein is LINE-1 type transposase domain-containing protein 1 (L1td1) of Mus musculus (Mouse).